Reading from the N-terminus, the 164-residue chain is Phosphopantetheine adenylyltransferase (164 aa).

T10 serves as a coordination point for substrate. ATP is bound by residues 10–11 and H18; that span reads TF. Positions 42, 74, and 88 each coordinate substrate. ATP contacts are provided by residues 89-91, E99, and 124-130; these read GIR and YAFVSST.

It belongs to the bacterial CoaD family. Homohexamer. Requires Mg(2+) as cofactor.

It localises to the cytoplasm. It carries out the reaction (R)-4'-phosphopantetheine + ATP + H(+) = 3'-dephospho-CoA + diphosphate. It participates in cofactor biosynthesis; coenzyme A biosynthesis; CoA from (R)-pantothenate: step 4/5. Functionally, reversibly transfers an adenylyl group from ATP to 4'-phosphopantetheine, yielding dephospho-CoA (dPCoA) and pyrophosphate. This Tolumonas auensis (strain DSM 9187 / NBRC 110442 / TA 4) protein is Phosphopantetheine adenylyltransferase.